Here is a 268-residue protein sequence, read N- to C-terminus: Ribosomal RNA small subunit methyltransferase A (268 aa).

Residues Asn-16, Leu-18, Gly-43, Glu-64, Asp-89, and Asn-110 each contribute to the S-adenosyl-L-methionine site.

Belongs to the class I-like SAM-binding methyltransferase superfamily. rRNA adenine N(6)-methyltransferase family. RsmA subfamily.

The protein resides in the cytoplasm. The enzyme catalyses adenosine(1518)/adenosine(1519) in 16S rRNA + 4 S-adenosyl-L-methionine = N(6)-dimethyladenosine(1518)/N(6)-dimethyladenosine(1519) in 16S rRNA + 4 S-adenosyl-L-homocysteine + 4 H(+). Its function is as follows. Specifically dimethylates two adjacent adenosines (A1518 and A1519) in the loop of a conserved hairpin near the 3'-end of 16S rRNA in the 30S particle. May play a critical role in biogenesis of 30S subunits. In Pseudomonas syringae pv. tomato (strain ATCC BAA-871 / DC3000), this protein is Ribosomal RNA small subunit methyltransferase A.